The sequence spans 319 residues: Transaldolase (319 aa).

Lys126 acts as the Schiff-base intermediate with substrate in catalysis.

Belongs to the transaldolase family. Type 1 subfamily. Homodimer.

It is found in the cytoplasm. The catalysed reaction is D-sedoheptulose 7-phosphate + D-glyceraldehyde 3-phosphate = D-erythrose 4-phosphate + beta-D-fructose 6-phosphate. Its pathway is carbohydrate degradation; pentose phosphate pathway; D-glyceraldehyde 3-phosphate and beta-D-fructose 6-phosphate from D-ribose 5-phosphate and D-xylulose 5-phosphate (non-oxidative stage): step 2/3. Its function is as follows. Transaldolase is important for the balance of metabolites in the pentose-phosphate pathway. In Bordetella avium (strain 197N), this protein is Transaldolase.